The following is a 445-amino-acid chain: tRNA modification GTPase MnmE (445 aa).

Residues arginine 24, glutamate 81, and lysine 121 each contribute to the (6S)-5-formyl-5,6,7,8-tetrahydrofolate site. In terms of domain architecture, TrmE-type G spans 218–369 (GLTVVIAGPP…LLEALVGFAR (152 aa)). Residues 228 to 233 (NAGKST), 247 to 253 (SPHAGTT), 272 to 275 (DTAG), and 350 to 352 (SAR) contribute to the GTP site. Mg(2+)-binding residues include serine 232 and threonine 253. Lysine 445 is a binding site for (6S)-5-formyl-5,6,7,8-tetrahydrofolate.

Belongs to the TRAFAC class TrmE-Era-EngA-EngB-Septin-like GTPase superfamily. TrmE GTPase family. As to quaternary structure, homodimer. Heterotetramer of two MnmE and two MnmG subunits. K(+) is required as a cofactor.

Its subcellular location is the cytoplasm. Functionally, exhibits a very high intrinsic GTPase hydrolysis rate. Involved in the addition of a carboxymethylaminomethyl (cmnm) group at the wobble position (U34) of certain tRNAs, forming tRNA-cmnm(5)s(2)U34. The protein is tRNA modification GTPase MnmE of Bradyrhizobium sp. (strain BTAi1 / ATCC BAA-1182).